We begin with the raw amino-acid sequence, 142 residues long: Large ribosomal subunit protein uL13 (142 aa).

Belongs to the universal ribosomal protein uL13 family. In terms of assembly, part of the 50S ribosomal subunit.

Functionally, this protein is one of the early assembly proteins of the 50S ribosomal subunit, although it is not seen to bind rRNA by itself. It is important during the early stages of 50S assembly. The protein is Large ribosomal subunit protein uL13 of Alteromonas mediterranea (strain DSM 17117 / CIP 110805 / LMG 28347 / Deep ecotype).